A 40-amino-acid polypeptide reads, in one-letter code: Muscarinic m1-toxin3 (40 aa).

An intrachain disulfide couples C3 to C24.

Belongs to the three-finger toxin family. Short-chain subfamily. Aminergic toxin sub-subfamily. Monomer. Contains 4 disulfide bonds. Expressed by the venom gland.

Its subcellular location is the secreted. Functionally, binds irreversibly and specifically to M1 (CHRM1) muscarinic acetylcholine receptors, blocking further binding of antagonists and preventing the action of agonists. The protein is Muscarinic m1-toxin3 of Dendroaspis angusticeps (Eastern green mamba).